The sequence spans 138 residues: MVLMRTDPFRDLDRWTQQVLGTRRPAVMPMDAWRDGDQFVVEFDLPGVNADSLDLDVERNVLTVRAERPDLDQNREMVSAERPRGVFSRQLFLGDNLDTDKIEANYHDGVLRLTIPVAEKAKPRRIEINHNHRTAINA.

Residues 21-131 (GTRRPAVMPM…KPRRIEINHN (111 aa)) enclose the sHSP domain.

This sequence belongs to the small heat shock protein (HSP20) family.

In terms of biological role, not known. This protein is one of the major immune reactive proteins in mycobacteria. The polypeptide is 18 kDa antigen 2 (Mycobacterium avium).